A 449-amino-acid chain; its full sequence is Probable glucuronosyltransferase 47 A (449 aa).

Topologically, residues 1-31 (MEHPLECADSCSLAMSWFCNKKCRGWGLMKR) are cytoplasmic. A helical; Signal-anchor for type II membrane protein membrane pass occupies residues 32–52 (TVVASGLRSVVLLLLFIYFVQ). Over 53-449 (DVTAEMGHQR…GDLYPWGNDL (397 aa)) the chain is Lumenal. N-linked (GlcNAc...) asparagine glycosylation is found at asparagine 172 and asparagine 433.

This sequence belongs to the glycosyltransferase 47 family. As to expression, mostly expressed in newly formed or expanding tissues.

It is found in the golgi apparatus membrane. Functionally, involved in the synthesis of glucuronoxylan hemicellulose in secondary cell walls. The protein is Probable glucuronosyltransferase 47 A of Physcomitrium patens (Spreading-leaved earth moss).